A 461-amino-acid polypeptide reads, in one-letter code: Cysteine--tRNA ligase (461 aa).

Residue Cys28 coordinates Zn(2+). The 'HIGH' region motif lies at 30 to 40; the sequence is ITVYDLCHIGH. Zn(2+)-binding residues include Cys209, His234, and Glu238. The 'KMSKS' region motif lies at 266 to 270; it reads KMSKS. Lys269 provides a ligand contact to ATP.

This sequence belongs to the class-I aminoacyl-tRNA synthetase family. Monomer. Requires Zn(2+) as cofactor.

Its subcellular location is the cytoplasm. It carries out the reaction tRNA(Cys) + L-cysteine + ATP = L-cysteinyl-tRNA(Cys) + AMP + diphosphate. The chain is Cysteine--tRNA ligase from Cronobacter sakazakii (strain ATCC BAA-894) (Enterobacter sakazakii).